The chain runs to 762 residues: Transcription factor kpeA (762 aa).

Residues Phe-267–Ala-361 form a disordered region. Residues Lys-294–Pro-312 are compositionally biased toward low complexity. The zn(2)-C6 fungal-type DNA-binding region spans Cys-370–Cys-401.

The protein localises to the nucleus. Its function is as follows. Transcription factor that regulates conidiation as well as kojic acid production, likely by negatively controlling kojR and kojA expression. In Aspergillus oryzae (strain ATCC 42149 / RIB 40) (Yellow koji mold), this protein is Transcription factor kpeA.